Here is a 296-residue protein sequence, read N- to C-terminus: Phosphatidylserine decarboxylase proenzyme (296 aa).

Active-site charge relay system; for autoendoproteolytic cleavage activity residues include D100, H157, and S263. S263 functions as the Schiff-base intermediate with substrate; via pyruvic acid; for decarboxylase activity in the catalytic mechanism. S263 carries the pyruvic acid (Ser); by autocatalysis modification.

It belongs to the phosphatidylserine decarboxylase family. PSD-B subfamily. Prokaryotic type I sub-subfamily. In terms of assembly, heterodimer of a large membrane-associated beta subunit and a small pyruvoyl-containing alpha subunit. It depends on pyruvate as a cofactor. In terms of processing, is synthesized initially as an inactive proenzyme. Formation of the active enzyme involves a self-maturation process in which the active site pyruvoyl group is generated from an internal serine residue via an autocatalytic post-translational modification. Two non-identical subunits are generated from the proenzyme in this reaction, and the pyruvate is formed at the N-terminus of the alpha chain, which is derived from the carboxyl end of the proenzyme. The autoendoproteolytic cleavage occurs by a canonical serine protease mechanism, in which the side chain hydroxyl group of the serine supplies its oxygen atom to form the C-terminus of the beta chain, while the remainder of the serine residue undergoes an oxidative deamination to produce ammonia and the pyruvoyl prosthetic group on the alpha chain. During this reaction, the Ser that is part of the protease active site of the proenzyme becomes the pyruvoyl prosthetic group, which constitutes an essential element of the active site of the mature decarboxylase.

Its subcellular location is the cell membrane. The catalysed reaction is a 1,2-diacyl-sn-glycero-3-phospho-L-serine + H(+) = a 1,2-diacyl-sn-glycero-3-phosphoethanolamine + CO2. Its pathway is phospholipid metabolism; phosphatidylethanolamine biosynthesis; phosphatidylethanolamine from CDP-diacylglycerol: step 2/2. In terms of biological role, catalyzes the formation of phosphatidylethanolamine (PtdEtn) from phosphatidylserine (PtdSer). This is Phosphatidylserine decarboxylase proenzyme from Actinobacillus pleuropneumoniae serotype 7 (strain AP76).